Consider the following 315-residue polypeptide: MSKPRKQQHRKPKGRPISGWLILDKPLDFGSTEAVSKIKWLFNAQKAGHAGTLDPLASGMLPIALGDATKTVPYVMDGRKIYEFTVTWGEQRATDDLEGEVVESSDQRPEEQAIRDILPNYTGVIMQTPPQFSAIKIAGERAYDLARDGETVEIPAREVEIHRLTLLACPDADTAHFEVECGKGTYVRALARDMGRDLGCFGHISELRRTMVAPFGEDMMVPLETLTALEAIEDRDERLEALDAFLIDTAEALSSLPRLIINDDQAHRLKMGNPILLRGRDAPANHPEAYATAQGKLVAIGEIGEGEFRPKRVFG.

The active-site Nucleophile is the D54.

The protein belongs to the pseudouridine synthase TruB family. Type 1 subfamily.

The catalysed reaction is uridine(55) in tRNA = pseudouridine(55) in tRNA. Responsible for synthesis of pseudouridine from uracil-55 in the psi GC loop of transfer RNAs. The protein is tRNA pseudouridine synthase B of Agrobacterium fabrum (strain C58 / ATCC 33970) (Agrobacterium tumefaciens (strain C58)).